Here is a 296-residue protein sequence, read N- to C-terminus: GTPase Era (296 aa).

Residues 3 to 170 (KSGFITIVGR…LELMVKYLPE (168 aa)) enclose the Era-type G domain. A G1 region spans residues 11-18 (GRPNVGKS). Position 11-18 (11-18 (GRPNVGKS)) interacts with GTP. Residues 37-41 (QTTRN) are G2. The tract at residues 58-61 (DTPG) is G3. Residues 58–62 (DTPGI) and 120–123 (NKVD) contribute to the GTP site. The segment at 120 to 123 (NKVD) is G4. Residues 149-151 (ISA) are G5. Positions 201–278 (LSQEVPHGIA…NIKIWVKVRK (78 aa)) constitute a KH type-2 domain.

Belongs to the TRAFAC class TrmE-Era-EngA-EngB-Septin-like GTPase superfamily. Era GTPase family. Monomer.

The protein resides in the cytoplasm. Its subcellular location is the cell membrane. Functionally, an essential GTPase that binds both GDP and GTP, with rapid nucleotide exchange. Plays a role in 16S rRNA processing and 30S ribosomal subunit biogenesis and possibly also in cell cycle regulation and energy metabolism. This chain is GTPase Era, found in Clostridium perfringens (strain ATCC 13124 / DSM 756 / JCM 1290 / NCIMB 6125 / NCTC 8237 / Type A).